Here is a 90-residue protein sequence, read N- to C-terminus: Acylphosphatase (90 aa).

The region spanning 3-90 is the Acylphosphatase-like domain; that stretch reads HYHAIITGRV…AHYQDFRIKG (88 aa). Residues Arg-18 and Asn-36 contribute to the active site.

Belongs to the acylphosphatase family.

The enzyme catalyses an acyl phosphate + H2O = a carboxylate + phosphate + H(+). The chain is Acylphosphatase (acyP) from Bacillus pumilus (strain SAFR-032).